Here is a 213-residue protein sequence, read N- to C-terminus: Phosphate-specific transport system accessory protein PhoU homolog 2 (213 aa).

The protein belongs to the PhoU family. As to quaternary structure, homodimer.

Its subcellular location is the cytoplasm. Plays a role in the regulation of phosphate uptake. In this role, it may bind, possibly as a chaperone, to PhoR, PhoP or a PhoR-PhoP complex to promote dephosphorylation of phospho-PhoP, or inhibit formation of the PhoR-PhoP transitory complex. This is Phosphate-specific transport system accessory protein PhoU homolog 2 (phoU2) from Mycobacterium bovis (strain ATCC BAA-935 / AF2122/97).